Consider the following 617-residue polypeptide: Dihydroxy-acid dehydratase (617 aa).

Mg(2+) is bound at residue Asp-82. Position 123 (Cys-123) interacts with [2Fe-2S] cluster. Positions 124 and 125 each coordinate Mg(2+). Lys-125 carries the post-translational modification N6-carboxylysine. Cys-197 is a [2Fe-2S] cluster binding site. Glu-497 lines the Mg(2+) pocket. The Proton acceptor role is filled by Ser-523.

Belongs to the IlvD/Edd family. In terms of assembly, homodimer. Requires [2Fe-2S] cluster as cofactor. Mg(2+) is required as a cofactor.

It carries out the reaction (2R)-2,3-dihydroxy-3-methylbutanoate = 3-methyl-2-oxobutanoate + H2O. The enzyme catalyses (2R,3R)-2,3-dihydroxy-3-methylpentanoate = (S)-3-methyl-2-oxopentanoate + H2O. The protein operates within amino-acid biosynthesis; L-isoleucine biosynthesis; L-isoleucine from 2-oxobutanoate: step 3/4. Its pathway is amino-acid biosynthesis; L-valine biosynthesis; L-valine from pyruvate: step 3/4. Its function is as follows. Functions in the biosynthesis of branched-chain amino acids. Catalyzes the dehydration of (2R,3R)-2,3-dihydroxy-3-methylpentanoate (2,3-dihydroxy-3-methylvalerate) into 2-oxo-3-methylpentanoate (2-oxo-3-methylvalerate) and of (2R)-2,3-dihydroxy-3-methylbutanoate (2,3-dihydroxyisovalerate) into 2-oxo-3-methylbutanoate (2-oxoisovalerate), the penultimate precursor to L-isoleucine and L-valine, respectively. The sequence is that of Dihydroxy-acid dehydratase from Streptomyces avermitilis (strain ATCC 31267 / DSM 46492 / JCM 5070 / NBRC 14893 / NCIMB 12804 / NRRL 8165 / MA-4680).